Reading from the N-terminus, the 132-residue chain is Agouti-signaling protein (132 aa).

The signal sequence occupies residues 1–22 (MDVTRLLLATLLVFLCFFTANS). A glycan (N-linked (GlcNAc...) asparagine) is linked at asparagine 39. Residues 62–85 (IGRKAAEKKRSSKKEASMKKVVRP) are disordered. The span at 65–79 (KAAEKKRSSKKEASM) shows a compositional bias: basic and acidic residues. 5 disulfide bridges follow: cysteine 93/cysteine 108, cysteine 100/cysteine 114, cysteine 107/cysteine 125, cysteine 111/cysteine 132, and cysteine 116/cysteine 123. The region spanning 93–132 (CVATRNSCKPPAPACCDPCASCQCRFFRSACSCRVLSLNC) is the Agouti domain.

Widely expressed at low levels. Highly expressed in the skin. Expressed in adipose tissue.

It is found in the secreted. Functionally, involved in the regulation of melanogenesis. The binding of ASP to MC1R precludes alpha-MSH initiated signaling and thus blocks production of cAMP, leading to a down-regulation of eumelanogenesis (brown/black pigment) and thus increasing synthesis of pheomelanin (yellow/red pigment). In higher primates, agouti may affect the quality of hair pigmentation rather than its pattern of deposition. Could well play a role in neuroendocrine aspects of melanocortin action. May have some functional role in regulating the lipid metabolism with adipocytes. The protein is Agouti-signaling protein (ASIP) of Homo sapiens (Human).